The chain runs to 534 residues: Hypothemycin biosynthesis cluster protein hpm4 (534 aa).

Disordered stretches follow at residues I34–P61, L110–L130, and D236–I287. Composition is skewed to low complexity over residues S112–P127 and T258–T275.

Its pathway is secondary metabolite biosynthesis. Part of the gene cluster that mediates the biosynthesis of hypothemycin, a resorcylic acid lactone (RAL) that irreversibly inhibits a subset of protein kinases with a conserved cysteine in the ATP binding site such as human ERK2. The first step is performed by both PKSs hmp3 and hmp8 and leads to the production of 7',8'-dehydrozearalenol (DHZ). The highly reducing PKS hpm8 synthesizes the reduced hexaketide (7S,11S,2E,8E)-7,11-dihydroxy-dodeca-2,8-dienoate, which is transferred downstream to the non-reducing PKS hpm3. Hpm3 then extends the reduced hexaketide to a nonaketide, after which regioselective cyclization and macrolactonization affords DHZ. The next step is the conversion of DHZ into aigialomycin C and is performed by the O-methyltransferase hmp5, the FAD-binding monooxygenase hmp7, and the cytochrome P450 monooxygenase hmp1. The wide substrate tolerance of the hmp5 and hmp7 implies that the reactions from DHZ to aigialomycin C can occur in any order. The steps from aigialomycin C to hypothemycin are less well established. The FAD-linked oxidoreductase hmp9 presumably catalyzes oxidation of the C-6' hydroxyl to a ketone. The timing of this oxidation is important, since the resulting enone functional group is a Michael acceptor that can react spontaneously with glutathione, an abundant metabolite in fungal cells. The glutathione S-transferase hmp2 catalyzes cis-trans isomerization of the 7',8' double bond with equilibrium favoring the trans isomer. The hpm6-encoded transporter might preferentially pump hypothemycin out of the cell relative to the trans isomer aigialomycin A. The cis-to-trans isomerization may be coupled with C-4' hydroxylation, since all known hypothemycin analogs containing the enone functional group also have hydroxyl groups at both C-4' and C-5'. This chain is Hypothemycin biosynthesis cluster protein hpm4, found in Hypomyces subiculosus (Nectria subiculosa).